The primary structure comprises 324 residues: Probable UDP-sugar transporter protein SLC35A4 (324 aa).

Residues 1-18 (MSVEDGGMPGLGRPRQAR) are Cytoplasmic-facing. The helical transmembrane segment at 19–39 (WTLMLLLSTAMYGAHAPLLAL) threads the bilayer. Residues 40-52 (CHVDGRVPFRPSS) are Lumenal-facing. Residues 53–73 (AVLLTELTKLLLCAFSLLVGW) form a helical membrane-spanning segment. The Cytoplasmic segment spans residues 74-85 (QAWPQGPPPWRQ). A helical transmembrane segment spans residues 86–106 (AAPFALSALLYGANNNLVIYL). The Lumenal portion of the chain corresponds to 107 to 142 (QRYMDPSTYQVLSNLKIGSTAVLYCLCLRHRLSVRQ). Residues 143–163 (GLALLLLMAAGACYAAGGLQV) form a helical membrane-spanning segment. The Cytoplasmic segment spans residues 164-180 (PGNTLPSPPPAAAASPM). A helical transmembrane segment spans residues 181-201 (PLHITPLGLLLLILYCLISGL). Residues 202–214 (SSVYTELLMKRQR) are Lumenal-facing. The helical transmembrane segment at 215–235 (LPLALQNLFLYTFGVLLNLGL) threads the bilayer. Residues 236 to 250 (HAGGGSGPGLLEGFS) lie on the Cytoplasmic side of the membrane. A helical membrane pass occupies residues 251 to 271 (GWAALVVLSQALNGLLMSAVM). Residues 272 to 275 (KHGS) lie on the Lumenal side of the membrane. The chain crosses the membrane as a helical span at residues 276–298 (SITRLFVVSCSLVVNAVLSAVLL). Topologically, residues 299-324 (RLQLTAAFFLATLLIGLAMRLYYGSR) are cytoplasmic.

This sequence belongs to the nucleotide-sugar transporter family. SLC35A subfamily. Found in a complex with SLC35A2 and SLC35A3.

The protein resides in the golgi apparatus membrane. The catalysed reaction is CDP-L-ribitol(in) + CDP(out) = CDP-L-ribitol(out) + CDP(in). Functionally, mediates the transport of CDP-ribitol. Does not exhibit CMP-sialic acid, UDP-galactose and UDP-N-acetylglucosamine transport activity. The protein is Probable UDP-sugar transporter protein SLC35A4 of Homo sapiens (Human).